The following is a 185-amino-acid chain: Ribosome-recycling factor (185 aa).

The protein belongs to the RRF family.

It is found in the cytoplasm. Responsible for the release of ribosomes from messenger RNA at the termination of protein biosynthesis. May increase the efficiency of translation by recycling ribosomes from one round of translation to another. This is Ribosome-recycling factor from Rhodococcus erythropolis (strain PR4 / NBRC 100887).